The chain runs to 453 residues: Glutamyl-tRNA reductase (453 aa).

Substrate is bound by residues 52–55, Ser-105, 110–112, and Gln-116; these read TCNR and EDQ. Residue Cys-53 is the Nucleophile of the active site. 184–189 is a binding site for NADP(+); that stretch reads GAGEMA. Over residues 413–424 the composition is skewed to low complexity; that stretch reads PGLEPEPTELPT. A disordered region spans residues 413–453; the sequence is PGLEPEPTELPTVPDGPEGVPEELRERMSSGMLEQFSTNDD.

This sequence belongs to the glutamyl-tRNA reductase family. Homodimer.

The catalysed reaction is (S)-4-amino-5-oxopentanoate + tRNA(Glu) + NADP(+) = L-glutamyl-tRNA(Glu) + NADPH + H(+). It functions in the pathway porphyrin-containing compound metabolism; protoporphyrin-IX biosynthesis; 5-aminolevulinate from L-glutamyl-tRNA(Glu): step 1/2. Catalyzes the NADPH-dependent reduction of glutamyl-tRNA(Glu) to glutamate 1-semialdehyde (GSA). This chain is Glutamyl-tRNA reductase, found in Natronomonas pharaonis (strain ATCC 35678 / DSM 2160 / CIP 103997 / JCM 8858 / NBRC 14720 / NCIMB 2260 / Gabara) (Halobacterium pharaonis).